The sequence spans 365 residues: S-type anion channel SLAH4 (365 aa).

At 1-25 (MEIPSQEIHIMIDNTISRRKERKTN) the chain is on the cytoplasmic side. Residues 26–46 (LADAEPIVLMSVLSSLHAGYF) form a helical membrane-spanning segment. Residues 47-73 (RISLSLCSQALLWKIMVHLHSELPSMA) are Extracellular-facing. A helical transmembrane segment spans residues 74 to 94 (YYLLWYLALATQVSLCFLYAF). Over 95 to 106 (KCIFLFDMVKEE) the chain is Cytoplasmic. Residues 107–127 (FSHYIGVNYLYAPSISCLLLL) traverse the membrane as a helical segment. Residues 128-131 (QSAP) are Extracellular-facing. The chain crosses the membrane as a helical span at residues 132–152 (MIEPHSVLYQTLFWIFAVPVL). Residues 153 to 168 (TLDTKLYGQWFTTEKR) lie on the Cytoplasmic side of the membrane. The chain crosses the membrane as a helical span at residues 169 to 189 (FLSIMANPASQVSVIANLVAA). Topologically, residues 190–199 (RGAAEMGWKE) are extracellular. The helical transmembrane segment at 200 to 220 (CALCLFSLGMVHYLVIFVTLY) threads the bilayer. The Cytoplasmic segment spans residues 221–235 (QRLPGGNNFPTTLRP). A helical membrane pass occupies residues 236 to 256 (VFFLFFAAPATASLAWNSICG). Position 257 (Asn-257) is a topological domain, extracellular. A helical membrane pass occupies residues 258-278 (FDTIAKMLFFLSLFIFISLVC). Topologically, residues 279-291 (RPNLLKKSIKRFN) are cytoplasmic. The helical transmembrane segment at 292–312 (VAWWAYSFPITFLALNSVQYA) threads the bilayer. Topologically, residues 313 to 321 (QEVKDHVAS) are extracellular. Residues 322–342 (VLMFIFSSMSVLIFISVMLLT) form a helical membrane-spanning segment. The Cytoplasmic segment spans residues 343 to 365 (AANSKRLLRRDHVLWSSTGPKDK).

This sequence belongs to the SLAC1 S-type anion channel family. As to quaternary structure, homotrimer.

It is found in the cell membrane. Its function is as follows. Slow, weak voltage-dependent S-type anion efflux channel involved in maintenance of anion homeostasis. The polypeptide is S-type anion channel SLAH4 (SLAH4) (Arabidopsis thaliana (Mouse-ear cress)).